The sequence spans 455 residues: Cysteine--tRNA ligase (455 aa).

C28 contacts Zn(2+). The 'HIGH' region signature appears at 30–40 (MTVYDYCHLGH). Zn(2+) contacts are provided by C209, H234, and E238. The 'KMSKS' region motif lies at 266–270 (KMSKS). K269 contacts ATP.

It belongs to the class-I aminoacyl-tRNA synthetase family. As to quaternary structure, monomer. Zn(2+) serves as cofactor.

The protein resides in the cytoplasm. The catalysed reaction is tRNA(Cys) + L-cysteine + ATP = L-cysteinyl-tRNA(Cys) + AMP + diphosphate. This chain is Cysteine--tRNA ligase, found in Methylobacillus flagellatus (strain ATCC 51484 / DSM 6875 / VKM B-1610 / KT).